The following is a 443-amino-acid chain: Tubulin beta chain (443 aa).

Residues Gln11, Glu69, Ser138, Gly142, Thr143, Gly144, Asn204, and Asn226 each contribute to the GTP site. A Mg(2+)-binding site is contributed by Glu69. The tract at residues 424 to 443 (QYQDATAEEEGEFEEEEGEN) is disordered. Over residues 429 to 443 (TAEEEGEFEEEEGEN) the composition is skewed to acidic residues.

It belongs to the tubulin family. As to quaternary structure, dimer of alpha and beta chains. A typical microtubule is a hollow water-filled tube with an outer diameter of 25 nm and an inner diameter of 15 nM. Alpha-beta heterodimers associate head-to-tail to form protofilaments running lengthwise along the microtubule wall with the beta-tubulin subunit facing the microtubule plus end conferring a structural polarity. Microtubules usually have 13 protofilaments but different protofilament numbers can be found in some organisms and specialized cells. It depends on Mg(2+) as a cofactor. In terms of processing, some glutamate residues at the C-terminus are either polyglutamylated or polyglycylated. These 2 modifications occur exclusively on glutamate residues and result in either polyglutamate or polyglycine chains on the gamma-carboxyl group. Both modifications can coexist on the same protein on adjacent residues, and lowering polyglycylation levels increases polyglutamylation, and reciprocally. The precise function of such modifications is still unclear but they regulate the assembly and dynamics of axonemal microtubules.

It is found in the cytoplasm. It localises to the cytoskeleton. Tubulin is the major constituent of microtubules, a cylinder consisting of laterally associated linear protofilaments composed of alpha- and beta-tubulin heterodimers. Microtubules grow by the addition of GTP-tubulin dimers to the microtubule end, where a stabilizing cap forms. Below the cap, tubulin dimers are in GDP-bound state, owing to GTPase activity of alpha-tubulin. This is Tubulin beta chain (BTU1) from Tetrahymena thermophila.